Here is a 332-residue protein sequence, read N- to C-terminus: Adenine deaminase (332 aa).

Zn(2+)-binding residues include His-14, His-16, and His-194. The active-site Proton donor is Glu-197. Asp-275 provides a ligand contact to Zn(2+). Asp-276 is a binding site for substrate.

This sequence belongs to the metallo-dependent hydrolases superfamily. Adenosine and AMP deaminases family. Adenine deaminase type 2 subfamily. The cofactor is Zn(2+).

It catalyses the reaction adenine + H2O + H(+) = hypoxanthine + NH4(+). In terms of biological role, catalyzes the hydrolytic deamination of adenine to hypoxanthine. Plays an important role in the purine salvage pathway and in nitrogen catabolism. In Psychrobacter cryohalolentis (strain ATCC BAA-1226 / DSM 17306 / VKM B-2378 / K5), this protein is Adenine deaminase.